Here is a 467-residue protein sequence, read N- to C-terminus: tRNA modification GTPase MnmE (467 aa).

(6S)-5-formyl-5,6,7,8-tetrahydrofolate-binding residues include Arg25, Glu87, and Lys130. In terms of domain architecture, TrmE-type G spans 226–389 (GLSVVLAGQP…LRGELLRIAG (164 aa)). A K(+)-binding site is contributed by Asn236. GTP is bound by residues 236 to 241 (NVGKSS), 255 to 261 (TPIAGTT), and 280 to 283 (DTAG). Ser240 contributes to the Mg(2+) binding site. Residues Thr255, Ile257, and Thr260 each contribute to the K(+) site. Position 261 (Thr261) interacts with Mg(2+). Lys467 contacts (6S)-5-formyl-5,6,7,8-tetrahydrofolate.

This sequence belongs to the TRAFAC class TrmE-Era-EngA-EngB-Septin-like GTPase superfamily. TrmE GTPase family. In terms of assembly, homodimer. Heterotetramer of two MnmE and two MnmG subunits. Requires K(+) as cofactor.

The protein localises to the cytoplasm. Its function is as follows. Exhibits a very high intrinsic GTPase hydrolysis rate. Involved in the addition of a carboxymethylaminomethyl (cmnm) group at the wobble position (U34) of certain tRNAs, forming tRNA-cmnm(5)s(2)U34. This is tRNA modification GTPase MnmE from Burkholderia mallei (strain NCTC 10247).